Consider the following 51-residue polypeptide: Cyclic phosphodiesterase (51 aa).

H11 (proton donor/acceptor) is an active-site residue. Residue T13 participates in substrate binding. Catalysis depends on H38, which acts as the Proton donor/acceptor. Substrate is bound by residues S40 and Y43.

The protein belongs to the 2H phosphoesterase superfamily. CPD1 family.

Its function is as follows. Hydrolyzes ADP-ribose 1'',2''-cyclic phosphate (Appr&gt;1) that is produced during tRNA splicing into ADP-ribose 1''-phosphate (Appr-1''p). In Triticum aestivum (Wheat), this protein is Cyclic phosphodiesterase.